The chain runs to 417 residues: Serine hydroxymethyltransferase (417 aa).

Residues leucine 121 and 125–127 (GHL) contribute to the (6S)-5,6,7,8-tetrahydrofolate site. Residue lysine 230 is modified to N6-(pyridoxal phosphate)lysine. 355-357 (SPF) is a (6S)-5,6,7,8-tetrahydrofolate binding site.

The protein belongs to the SHMT family. Homodimer. It depends on pyridoxal 5'-phosphate as a cofactor.

It localises to the cytoplasm. It carries out the reaction (6R)-5,10-methylene-5,6,7,8-tetrahydrofolate + glycine + H2O = (6S)-5,6,7,8-tetrahydrofolate + L-serine. It functions in the pathway one-carbon metabolism; tetrahydrofolate interconversion. Its pathway is amino-acid biosynthesis; glycine biosynthesis; glycine from L-serine: step 1/1. Catalyzes the reversible interconversion of serine and glycine with tetrahydrofolate (THF) serving as the one-carbon carrier. This reaction serves as the major source of one-carbon groups required for the biosynthesis of purines, thymidylate, methionine, and other important biomolecules. Also exhibits THF-independent aldolase activity toward beta-hydroxyamino acids, producing glycine and aldehydes, via a retro-aldol mechanism. The chain is Serine hydroxymethyltransferase from Legionella pneumophila (strain Lens).